A 588-amino-acid polypeptide reads, in one-letter code: Proteasome-associated ATPase (588 aa).

Basic and acidic residues predominate over residues 1 to 10 (MAAHDDDMNR). A disordered region spans residues 1 to 23 (MAAHDDDMNRGIRPGRGSDDPAG). Residues 47–94 (RILEERIVELQTNLAGVSAQNERLANTLREARDQIVALKEEVDRLAQP) adopt a coiled-coil conformation. 276–281 (GCGKTL) serves as a coordination point for ATP. The segment at 587–588 (YL) is docks into pockets in the proteasome alpha-ring.

This sequence belongs to the AAA ATPase family. Homohexamer. Assembles into a hexameric ring structure that caps the 20S proteasome core. Strongly interacts with the prokaryotic ubiquitin-like protein Pup through a hydrophobic interface; the interacting region of ARC lies in its N-terminal coiled-coil domain. There is one Pup binding site per ARC hexamer ring. Upon ATP-binding, the C-terminus of ARC interacts with the alpha-rings of the proteasome core, possibly by binding to the intersubunit pockets.

It functions in the pathway protein degradation; proteasomal Pup-dependent pathway. ATPase which is responsible for recognizing, binding, unfolding and translocation of pupylated proteins into the bacterial 20S proteasome core particle. May be essential for opening the gate of the 20S proteasome via an interaction with its C-terminus, thereby allowing substrate entry and access to the site of proteolysis. Thus, the C-termini of the proteasomal ATPase may function like a 'key in a lock' to induce gate opening and therefore regulate proteolysis. The chain is Proteasome-associated ATPase from Streptomyces avermitilis (strain ATCC 31267 / DSM 46492 / JCM 5070 / NBRC 14893 / NCIMB 12804 / NRRL 8165 / MA-4680).